We begin with the raw amino-acid sequence, 437 residues long: 23S rRNA (uracil(1939)-C(5))-methyltransferase RlmD (437 aa).

The 59-residue stretch at 10–68 folds into the TRAM domain; that stretch reads SAPRNTTFVAEILDLDYQGRGVAKVQGKTWFIENALPQEKVEVRIVDEKRHYGHGISCK. Cysteine 81, cysteine 87, cysteine 90, and cysteine 167 together coordinate [4Fe-4S] cluster. Residues glutamine 270, phenylalanine 299, asparagine 304, glutamate 320, asparagine 347, and aspartate 368 each contribute to the S-adenosyl-L-methionine site. The active-site Nucleophile is cysteine 394.

The protein belongs to the class I-like SAM-binding methyltransferase superfamily. RNA M5U methyltransferase family. RlmD subfamily.

The catalysed reaction is uridine(1939) in 23S rRNA + S-adenosyl-L-methionine = 5-methyluridine(1939) in 23S rRNA + S-adenosyl-L-homocysteine + H(+). Functionally, catalyzes the formation of 5-methyl-uridine at position 1939 (m5U1939) in 23S rRNA. The sequence is that of 23S rRNA (uracil(1939)-C(5))-methyltransferase RlmD from Pasteurella multocida (strain Pm70).